The following is a 126-amino-acid chain: Glycine cleavage system H protein (126 aa).

The 83-residue stretch at V22–E104 folds into the Lipoyl-binding domain. K63 carries the post-translational modification N6-lipoyllysine.

Belongs to the GcvH family. In terms of assembly, the glycine cleavage system is composed of four proteins: P, T, L and H. (R)-lipoate is required as a cofactor.

In terms of biological role, the glycine cleavage system catalyzes the degradation of glycine. The H protein shuttles the methylamine group of glycine from the P protein to the T protein. Is also involved in protein lipoylation via its role as an octanoyl/lipoyl carrier protein intermediate. The sequence is that of Glycine cleavage system H protein from Staphylococcus aureus (strain USA300).